The sequence spans 209 residues: Ribonuclease HII (209 aa).

One can recognise an RNase H type-2 domain in the interval 18–209; the sequence is GLVAGVDEVG…FKPVKALLER (192 aa). D24, E25, and D116 together coordinate a divalent metal cation.

Belongs to the RNase HII family. The cofactor is Mn(2+). Mg(2+) serves as cofactor.

It is found in the cytoplasm. The enzyme catalyses Endonucleolytic cleavage to 5'-phosphomonoester.. Its function is as follows. Endonuclease that specifically degrades the RNA of RNA-DNA hybrids. In Shewanella sp. (strain ANA-3), this protein is Ribonuclease HII.